The primary structure comprises 78 residues: UPF0369 protein RF_1112 (78 aa).

It belongs to the SDHAF4 family.

This chain is UPF0369 protein RF_1112, found in Rickettsia felis (strain ATCC VR-1525 / URRWXCal2) (Rickettsia azadi).